A 169-amino-acid polypeptide reads, in one-letter code: Probable NADH dehydrogenase [ubiquinone] 1 alpha subcomplex subunit 5, mitochondrial (169 aa).

The transit peptide at 1-11 directs the protein to the mitochondrion; the sequence is MFLRAIGRPLL.

This sequence belongs to the complex I NDUFA5 subunit family. Complex I is composed of at least 49 different subunits.

The protein resides in the mitochondrion inner membrane. Its function is as follows. Accessory subunit of the mitochondrial membrane respiratory chain NADH dehydrogenase (Complex I), that is believed not to be involved in catalysis. Complex I functions in the transfer of electrons from NADH to the respiratory chain. The immediate electron acceptor for the enzyme is believed to be ubiquinone. In Arabidopsis thaliana (Mouse-ear cress), this protein is Probable NADH dehydrogenase [ubiquinone] 1 alpha subcomplex subunit 5, mitochondrial.